A 383-amino-acid chain; its full sequence is Putative glutamate--cysteine ligase 2-2 (383 aa).

It belongs to the glutamate--cysteine ligase type 2 family. YbdK subfamily.

The catalysed reaction is L-cysteine + L-glutamate + ATP = gamma-L-glutamyl-L-cysteine + ADP + phosphate + H(+). Functionally, ATP-dependent carboxylate-amine ligase which exhibits weak glutamate--cysteine ligase activity. In Legionella pneumophila (strain Paris), this protein is Putative glutamate--cysteine ligase 2-2.